The sequence spans 255 residues: Ribosomal RNA small subunit methyltransferase G 2 (255 aa).

Glycine 90, phenylalanine 95, and arginine 155 together coordinate S-adenosyl-L-methionine. The segment covering 233 to 245 (EDEGEELLMDELS) has biased composition (acidic residues). The interval 233–255 (EDEGEELLMDELSNEEKRRWAKY) is disordered. Positions 246–255 (NEEKRRWAKY) are enriched in basic and acidic residues.

It belongs to the methyltransferase superfamily. RNA methyltransferase RsmG family.

It is found in the cytoplasm. It catalyses the reaction guanosine(527) in 16S rRNA + S-adenosyl-L-methionine = N(7)-methylguanosine(527) in 16S rRNA + S-adenosyl-L-homocysteine. Functionally, specifically methylates the N7 position of guanine in position 527 of 16S rRNA. This chain is Ribosomal RNA small subunit methyltransferase G 2, found in Bdellovibrio bacteriovorus (strain ATCC 15356 / DSM 50701 / NCIMB 9529 / HD100).